We begin with the raw amino-acid sequence, 437 residues long: Ribosomal protein uS12 methylthiotransferase RimO (437 aa).

Residues 9–124 form the MTTase N-terminal domain; that stretch reads TKVNIVTLGC…LPAILKKFRA (116 aa). The [4Fe-4S] cluster site is built by Cys18, Cys56, Cys90, Cys151, Cys155, and Cys158. Residues 137–367 form the Radical SAM core domain; it reads TTPSHYAYVK…MSIQEGISAE (231 aa). The TRAM domain occupies 370–437; the sequence is EKKIGNTYKV…EFDLFGEIVK (68 aa).

It belongs to the methylthiotransferase family. RimO subfamily. The cofactor is [4Fe-4S] cluster.

It is found in the cytoplasm. It catalyses the reaction L-aspartate(89)-[ribosomal protein uS12]-hydrogen + (sulfur carrier)-SH + AH2 + 2 S-adenosyl-L-methionine = 3-methylsulfanyl-L-aspartate(89)-[ribosomal protein uS12]-hydrogen + (sulfur carrier)-H + 5'-deoxyadenosine + L-methionine + A + S-adenosyl-L-homocysteine + 2 H(+). Catalyzes the methylthiolation of an aspartic acid residue of ribosomal protein uS12. This Cytophaga hutchinsonii (strain ATCC 33406 / DSM 1761 / CIP 103989 / NBRC 15051 / NCIMB 9469 / D465) protein is Ribosomal protein uS12 methylthiotransferase RimO.